The chain runs to 405 residues: Arginine biosynthesis bifunctional protein ArgJ (405 aa).

Substrate-binding residues include Thr152, Lys178, Thr189, Glu276, Asn400, and Thr405. Catalysis depends on Thr189, which acts as the Nucleophile.

This sequence belongs to the ArgJ family. As to quaternary structure, heterotetramer of two alpha and two beta chains.

It is found in the cytoplasm. It carries out the reaction N(2)-acetyl-L-ornithine + L-glutamate = N-acetyl-L-glutamate + L-ornithine. It catalyses the reaction L-glutamate + acetyl-CoA = N-acetyl-L-glutamate + CoA + H(+). Its pathway is amino-acid biosynthesis; L-arginine biosynthesis; L-ornithine and N-acetyl-L-glutamate from L-glutamate and N(2)-acetyl-L-ornithine (cyclic): step 1/1. It functions in the pathway amino-acid biosynthesis; L-arginine biosynthesis; N(2)-acetyl-L-ornithine from L-glutamate: step 1/4. Its function is as follows. Catalyzes two activities which are involved in the cyclic version of arginine biosynthesis: the synthesis of N-acetylglutamate from glutamate and acetyl-CoA as the acetyl donor, and of ornithine by transacetylation between N(2)-acetylornithine and glutamate. This Pseudomonas syringae pv. syringae (strain B728a) protein is Arginine biosynthesis bifunctional protein ArgJ.